We begin with the raw amino-acid sequence, 392 residues long: 25S rRNA (adenine(645)-N(1))-methyltransferase (392 aa).

The disordered stretch occupies residues M1–M96. Residues K27–K38 are compositionally biased toward basic residues. Residues N32–P61 adopt a coiled-coil conformation. Residues L39–V57 show a composition bias toward basic and acidic residues. Position 62 is a phosphoserine (S62). Over residues D69–E92 the composition is skewed to basic and acidic residues. The S-adenosyl-L-methionine site is built by H156, G207, D242, D254, and C271. A coiled-coil region spans residues A344–W382.

This sequence belongs to the methyltransferase superfamily. RRP8 family.

It is found in the nucleus. It localises to the nucleolus. The protein resides in the chromosome. The protein localises to the telomere. The enzyme catalyses adenosine(645) in 25S rRNA + S-adenosyl-L-methionine = N(1)-methyladenosine(645) in 25S rRNA + S-adenosyl-L-homocysteine + H(+). Functionally, S-adenosyl-L-methionine-dependent methyltransferase that specifically methylates the N(1) position of adenine 645 in 25S rRNA. Required both for ribosomal 40S and 60S subunits biogenesis. Required for efficient pre-rRNA cleavage at site A2. Also involved in telomere length regulation and maintenance. In Saccharomyces cerevisiae (strain ATCC 204508 / S288c) (Baker's yeast), this protein is 25S rRNA (adenine(645)-N(1))-methyltransferase (RRP8).